The primary structure comprises 437 residues: Putative ABC transporter ATP-binding protein CTC_00753 (437 aa).

ABC transporter domains are found at residues Met-1–Ile-143 and Leu-179–Lys-416. An ATP-binding site is contributed by Gly-219 to Ser-226.

Belongs to the ABC transporter superfamily.

The protein resides in the cell membrane. Probably part of an ABC transporter complex. Responsible for energy coupling to the transport system. The polypeptide is Putative ABC transporter ATP-binding protein CTC_00753 (Clostridium tetani (strain Massachusetts / E88)).